The primary structure comprises 258 residues: Exosome complex component Rrp41 (258 aa).

The protein belongs to the RNase PH family. Rrp41 subfamily. As to quaternary structure, component of the archaeal exosome complex. Forms a hexameric ring-like arrangement composed of 3 Rrp41-Rrp42 heterodimers. The hexameric ring associates with a trimer of Rrp4 and/or Csl4 subunits.

The protein localises to the cytoplasm. Its function is as follows. Catalytic component of the exosome, which is a complex involved in RNA degradation. Has 3'-&gt;5' exoribonuclease activity. Can also synthesize heteromeric RNA-tails. The chain is Exosome complex component Rrp41 from Archaeoglobus fulgidus (strain ATCC 49558 / DSM 4304 / JCM 9628 / NBRC 100126 / VC-16).